A 385-amino-acid polypeptide reads, in one-letter code: Queuine tRNA-ribosyltransferase (385 aa).

Asp92 functions as the Proton acceptor in the catalytic mechanism. Residues 92–96 (DSGGF), Asp146, Gln188, and Gly215 contribute to the substrate site. Residues 246–252 (GVGHPED) form an RNA binding region. Asp265 acts as the Nucleophile in catalysis. The RNA binding; important for wobble base 34 recognition stretch occupies residues 270–274 (TRTGR). Zn(2+) contacts are provided by Cys303, Cys305, Cys308, and His334.

Belongs to the queuine tRNA-ribosyltransferase family. In terms of assembly, homodimer. Within each dimer, one monomer is responsible for RNA recognition and catalysis, while the other monomer binds to the replacement base PreQ1. Zn(2+) serves as cofactor.

The enzyme catalyses 7-aminomethyl-7-carbaguanine + guanosine(34) in tRNA = 7-aminomethyl-7-carbaguanosine(34) in tRNA + guanine. Its pathway is tRNA modification; tRNA-queuosine biosynthesis. Functionally, catalyzes the base-exchange of a guanine (G) residue with the queuine precursor 7-aminomethyl-7-deazaguanine (PreQ1) at position 34 (anticodon wobble position) in tRNAs with GU(N) anticodons (tRNA-Asp, -Asn, -His and -Tyr). Catalysis occurs through a double-displacement mechanism. The nucleophile active site attacks the C1' of nucleotide 34 to detach the guanine base from the RNA, forming a covalent enzyme-RNA intermediate. The proton acceptor active site deprotonates the incoming PreQ1, allowing a nucleophilic attack on the C1' of the ribose to form the product. After dissociation, two additional enzymatic reactions on the tRNA convert PreQ1 to queuine (Q), resulting in the hypermodified nucleoside queuosine (7-(((4,5-cis-dihydroxy-2-cyclopenten-1-yl)amino)methyl)-7-deazaguanosine). This chain is Queuine tRNA-ribosyltransferase, found in Thermus thermophilus (strain ATCC 27634 / DSM 579 / HB8).